The primary structure comprises 257 residues: Outer membrane protein Omp26La (257 aa).

Positions 1–19 are cleaved as a signal peptide; sequence MKKIALFITASLIAGNTLA.

Belongs to the MipA/OmpV family.

The protein localises to the cell outer membrane. This is Outer membrane protein Omp26La from Vibrio anguillarum (Listonella anguillarum).